The sequence spans 294 residues: Shikimate dehydrogenase (NADP(+)) (294 aa).

Residues 22–24 (SLS) and Ser69 each bind shikimate. Catalysis depends on Lys73, which acts as the Proton acceptor. Residues Asn94 and Asp111 each contribute to the shikimate site. Residues 135-139 (GAGGA) and Leu236 contribute to the NADP(+) site. Residue Tyr238 coordinates shikimate. Gly260 serves as a coordination point for NADP(+).

The protein belongs to the shikimate dehydrogenase family. In terms of assembly, homodimer.

It catalyses the reaction shikimate + NADP(+) = 3-dehydroshikimate + NADPH + H(+). It functions in the pathway metabolic intermediate biosynthesis; chorismate biosynthesis; chorismate from D-erythrose 4-phosphate and phosphoenolpyruvate: step 4/7. Involved in the biosynthesis of the chorismate, which leads to the biosynthesis of aromatic amino acids. Catalyzes the reversible NADPH linked reduction of 3-dehydroshikimate (DHSA) to yield shikimate (SA). The chain is Shikimate dehydrogenase (NADP(+)) from Streptococcus equi subsp. zooepidemicus (strain MGCS10565).